The following is a 216-amino-acid chain: uncharacterized protein (216 aa).

The signal sequence occupies residues methionine 1–alanine 17. Cysteine 18 carries N-palmitoyl cysteine lipidation. Cysteine 18 carries the S-diacylglycerol cysteine lipid modification. Residues serine 133 to cysteine 162 adopt a coiled-coil conformation.

The protein resides in the cell membrane. This is an uncharacterized protein from Rickettsia conorii (strain ATCC VR-613 / Malish 7).